Here is a 338-residue protein sequence, read N- to C-terminus: MALQRRTTLTKYLIEQQRETNNLPADLRLLIEVVARACKAISYHVSKGALGDALGTAGSENVQGEVQKKLDILSNEILLEANEWGGNLAGMASEEMEQFFPIPANYPKGEYLLVFDPLDGSSNIDVNVSIGTIFSVLRCPDGQQPTEQSFLQPGTQQVAAGYAVYGPQTVLVLTTGNGVNCFTLDRELGSWVLTQSDMRIPVETREYAINASNERHWYPPVEQYIGELKAGKDGPRQSDFNMRWIASMVADVHRILNRGGIFMYPADKRTPDKPGKLRLMYEANPMAFIVEQAGGAATNGEKRILDIQPKSLHERVAVFLGSKNEVDRVTRYHLETKK.

Positions 94, 116, 118, and 119 each coordinate Mg(2+). Residues 119-122, asparagine 210, and lysine 276 each bind substrate; that span reads DGSS. Glutamate 282 is a Mg(2+) binding site.

This sequence belongs to the FBPase class 1 family. As to quaternary structure, homotetramer. The cofactor is Mg(2+).

It is found in the cytoplasm. It catalyses the reaction beta-D-fructose 1,6-bisphosphate + H2O = beta-D-fructose 6-phosphate + phosphate. Its pathway is carbohydrate biosynthesis; gluconeogenesis. This Paraburkholderia phytofirmans (strain DSM 17436 / LMG 22146 / PsJN) (Burkholderia phytofirmans) protein is Fructose-1,6-bisphosphatase class 1.